The following is a 264-amino-acid chain: Probable septum site-determining protein MinC (264 aa).

The interval serine 103–alanine 147 is disordered. Over residues glycine 110–alanine 122 the composition is skewed to basic and acidic residues. The segment covering aspartate 124–alanine 147 has biased composition (low complexity).

It belongs to the MinC family. As to quaternary structure, interacts with MinD and FtsZ.

In terms of biological role, cell division inhibitor that blocks the formation of polar Z ring septums. Rapidly oscillates between the poles of the cell to destabilize FtsZ filaments that have formed before they mature into polar Z rings. Prevents FtsZ polymerization. The protein is Probable septum site-determining protein MinC of Ralstonia pickettii (strain 12J).